A 370-amino-acid polypeptide reads, in one-letter code: Molybdenum import ATP-binding protein ModC (370 aa).

Residues 2 to 233 (SVRVDIGHRL…LDLLPAEERG (232 aa)) enclose the ABC transporter domain. 31-38 (GPSGSGKT) is an ATP binding site. A Mop domain is found at 293-359 (GLSALNILPG…VKTVSFDRAN (67 aa)).

The protein belongs to the ABC transporter superfamily. Molybdate importer (TC 3.A.1.8) family. In terms of assembly, the complex is composed of two ATP-binding proteins (ModC), two transmembrane proteins (ModB) and a solute-binding protein (ModA).

The protein resides in the cell inner membrane. It carries out the reaction molybdate(out) + ATP + H2O = molybdate(in) + ADP + phosphate + H(+). Its function is as follows. Part of the ABC transporter complex ModABC involved in molybdenum import. Responsible for energy coupling to the transport system. This Mesorhizobium japonicum (strain LMG 29417 / CECT 9101 / MAFF 303099) (Mesorhizobium loti (strain MAFF 303099)) protein is Molybdenum import ATP-binding protein ModC.